We begin with the raw amino-acid sequence, 521 residues long: Bacillolysin (521 aa).

The N-terminal stretch at 1–27 (MGLGKKLSVAVAASFMSLTISLPGVQA) is a signal peptide. Positions 28–221 (AENPQLKENL…ILKKQNKVEH (194 aa)) are cleaved as a propeptide — activation peptide. 2 residues coordinate Ca(2+): Gln-283 and Asp-360. His-364 is a binding site for Zn(2+). The active site involves Glu-365. Zn(2+) is bound by residues His-368 and Glu-388. Ca(2+)-binding residues include Asp-399, Asp-402, Asp-404, Glu-407, and Val-411. His-449 functions as the Proton donor in the catalytic mechanism.

Belongs to the peptidase M4 family. It depends on Ca(2+) as a cofactor. The cofactor is Zn(2+).

It localises to the secreted. It carries out the reaction Similar, but not identical, to that of thermolysin.. Extracellular zinc metalloprotease. This is Bacillolysin (npr) from Bacillus amyloliquefaciens (Bacillus velezensis).